The sequence spans 408 residues: S-adenosylmethionine synthase (408 aa).

ATP is bound at residue His19. Position 21 (Asp21) interacts with Mg(2+). Residue Glu47 coordinates K(+). Residues Glu60 and Gln104 each contribute to the L-methionine site. Residues 104 to 114 (QSPEIASGVDH) are flexible loop. ATP is bound by residues 185–187 (DAK), 255–256 (RF), Asp264, 270–271 (RK), Ala287, and Lys291. An L-methionine-binding site is contributed by Asp264. Lys295 is an L-methionine binding site.

It belongs to the AdoMet synthase family. In terms of assembly, homotetramer; dimer of dimers. Mg(2+) is required as a cofactor. Requires K(+) as cofactor.

Its subcellular location is the cytoplasm. It carries out the reaction L-methionine + ATP + H2O = S-adenosyl-L-methionine + phosphate + diphosphate. It participates in amino-acid biosynthesis; S-adenosyl-L-methionine biosynthesis; S-adenosyl-L-methionine from L-methionine: step 1/1. Catalyzes the formation of S-adenosylmethionine (AdoMet) from methionine and ATP. The overall synthetic reaction is composed of two sequential steps, AdoMet formation and the subsequent tripolyphosphate hydrolysis which occurs prior to release of AdoMet from the enzyme. This is S-adenosylmethionine synthase from Deinococcus radiodurans (strain ATCC 13939 / DSM 20539 / JCM 16871 / CCUG 27074 / LMG 4051 / NBRC 15346 / NCIMB 9279 / VKM B-1422 / R1).